A 332-amino-acid chain; its full sequence is MQEDSKVYDITVIGGGPVGLFTAFYGGMRQASVKIIESLPQLGGQLSALYPEKYIYDVAGFPKIRAQELVDNLKEQMDKFDQTICLEQAVETVEKQADGIFKLVTNQEIHYSKTIIITAGNGAFQPRKLELDAAESFEGSNLHYFINDLNQFAGRRVAVLGGGDSAVDWALMLEPIAKEVSIIHRRDKFRAHEHSVENLHNSKVNVVTPFVPTELIGEDRIEQIVLEEVKGDKKQVLDVDDVIVNFGFVSSLGPIKQWGLEIEKNSIVVKSTMETNIEGFYAAGDICTYEGKVKLIASGFGEAPTAVNNAKAYMDPKARVQPLHSTSLFENK.

E37, Q45, Y50, V90, F124, D285, and T326 together coordinate FAD.

The protein belongs to the ferredoxin--NADP reductase type 2 family. In terms of assembly, homodimer. Requires FAD as cofactor.

The catalysed reaction is 2 reduced [2Fe-2S]-[ferredoxin] + NADP(+) + H(+) = 2 oxidized [2Fe-2S]-[ferredoxin] + NADPH. The protein is Ferredoxin--NADP reductase 2 of Bacillus pumilus (strain SAFR-032).